A 145-amino-acid chain; its full sequence is Bacilliredoxin SAR1592 (145 aa).

It belongs to the bacilliredoxin family.

This is Bacilliredoxin SAR1592 from Staphylococcus aureus (strain MRSA252).